Reading from the N-terminus, the 266-residue chain is Indole-3-glycerol phosphate synthase (266 aa).

The protein belongs to the TrpC family.

It catalyses the reaction 1-(2-carboxyphenylamino)-1-deoxy-D-ribulose 5-phosphate + H(+) = (1S,2R)-1-C-(indol-3-yl)glycerol 3-phosphate + CO2 + H2O. Its pathway is amino-acid biosynthesis; L-tryptophan biosynthesis; L-tryptophan from chorismate: step 4/5. In Variovorax paradoxus (strain S110), this protein is Indole-3-glycerol phosphate synthase.